Here is a 155-residue protein sequence, read N- to C-terminus: MRRRRAEIRQVPPDPVYGDVLVAKLINKVMWDGKKTTAQKIVYGAFDIIREKTKKDPLEVFRQAVENVKPVLEVRPRRVGGATYQVPIEVQEPRRTSLALRWIVEAARARKGRPMKEKLAEEIIAAYNNTGTAIKKKEDTHRMAEANRAFAHYRW.

It belongs to the universal ribosomal protein uS7 family. In terms of assembly, part of the 30S ribosomal subunit. Contacts proteins S9 and S11.

In terms of biological role, one of the primary rRNA binding proteins, it binds directly to 16S rRNA where it nucleates assembly of the head domain of the 30S subunit. Is located at the subunit interface close to the decoding center, probably blocks exit of the E-site tRNA. The protein is Small ribosomal subunit protein uS7 of Thermotoga petrophila (strain ATCC BAA-488 / DSM 13995 / JCM 10881 / RKU-1).